A 242-amino-acid polypeptide reads, in one-letter code: Large ribosomal subunit protein uL1 (242 aa).

The protein belongs to the universal ribosomal protein uL1 family. Part of the 50S ribosomal subunit.

In terms of biological role, binds directly to 23S rRNA. The L1 stalk is quite mobile in the ribosome, and is involved in E site tRNA release. Its function is as follows. Protein L1 is also a translational repressor protein, it controls the translation of the L11 operon by binding to its mRNA. This Streptomyces virginiae (Streptomyces cinnamonensis) protein is Large ribosomal subunit protein uL1.